The sequence spans 444 residues: Homogentisate 1,2-dioxygenase (444 aa).

Residues 92 to 111 (GDSADVPPTPPNQLRWDPLP) form a disordered region. Residue His-298 is the Proton acceptor of the active site. Fe cation is bound by residues His-341 and Glu-347. Positions 356 and 377 each coordinate homogentisate. His-377 lines the Fe cation pocket.

It belongs to the homogentisate dioxygenase family. As to quaternary structure, hexamer; dimer of trimers. Fe cation serves as cofactor.

The enzyme catalyses homogentisate + O2 = 4-maleylacetoacetate + H(+). Its pathway is amino-acid degradation; L-phenylalanine degradation; acetoacetate and fumarate from L-phenylalanine: step 4/6. Involved in the catabolism of homogentisate (2,5-dihydroxyphenylacetate or 2,5-OH-PhAc), a central intermediate in the degradation of phenylalanine and tyrosine. Catalyzes the oxidative ring cleavage of the aromatic ring of homogentisate to yield maleylacetoacetate. This Burkholderia vietnamiensis (strain G4 / LMG 22486) (Burkholderia cepacia (strain R1808)) protein is Homogentisate 1,2-dioxygenase.